A 296-amino-acid polypeptide reads, in one-letter code: 4-hydroxy-tetrahydrodipicolinate synthase (296 aa).

Residue Thr-44 coordinates pyruvate. Catalysis depends on Tyr-132, which acts as the Proton donor/acceptor. Residue Lys-162 is the Schiff-base intermediate with substrate of the active site. A pyruvate-binding site is contributed by Ile-204.

This sequence belongs to the DapA family. Homotetramer; dimer of dimers.

The protein resides in the cytoplasm. The catalysed reaction is L-aspartate 4-semialdehyde + pyruvate = (2S,4S)-4-hydroxy-2,3,4,5-tetrahydrodipicolinate + H2O + H(+). It participates in amino-acid biosynthesis; L-lysine biosynthesis via DAP pathway; (S)-tetrahydrodipicolinate from L-aspartate: step 3/4. Its function is as follows. Catalyzes the condensation of (S)-aspartate-beta-semialdehyde [(S)-ASA] and pyruvate to 4-hydroxy-tetrahydrodipicolinate (HTPA). This is 4-hydroxy-tetrahydrodipicolinate synthase from Novosphingobium aromaticivorans (strain ATCC 700278 / DSM 12444 / CCUG 56034 / CIP 105152 / NBRC 16084 / F199).